The following is a 598-amino-acid chain: Elongation factor 4 2 (598 aa).

In terms of domain architecture, tr-type G spans Lys-2 to Lys-184. GTP is bound by residues Asp-14–Thr-19 and Asn-131–Asp-134.

Belongs to the TRAFAC class translation factor GTPase superfamily. Classic translation factor GTPase family. LepA subfamily.

The protein localises to the cell inner membrane. The catalysed reaction is GTP + H2O = GDP + phosphate + H(+). Its function is as follows. Required for accurate and efficient protein synthesis under certain stress conditions. May act as a fidelity factor of the translation reaction, by catalyzing a one-codon backward translocation of tRNAs on improperly translocated ribosomes. Back-translocation proceeds from a post-translocation (POST) complex to a pre-translocation (PRE) complex, thus giving elongation factor G a second chance to translocate the tRNAs correctly. Binds to ribosomes in a GTP-dependent manner. This Rhodopirellula baltica (strain DSM 10527 / NCIMB 13988 / SH1) protein is Elongation factor 4 2.